The sequence spans 472 residues: Guanine nucleotide-binding protein alpha-1 subunit (472 aa).

Glycine 2 is lipidated: N-myristoyl glycine. The S-palmitoyl cysteine moiety is linked to residue cysteine 3. Residues 40-472 (NEIKLLLLGA…QQNLKKIGII (433 aa)) enclose the G-alpha domain. Residues 43–56 (KLLLLGAGESGKST) are G1 motif. The GTP site is built by glutamate 51, serine 52, glycine 53, lysine 54, serine 55, and threonine 56. Serine 55 is a Mg(2+) binding site. The insert; not present in other G-proteins stretch occupies residues 127 to 235 (LDYINASVAG…REIQGQNRRN (109 aa)). Residues 162 to 199 (GRAKAAFDEDGNISNVKSDTDRDAETVTQNEDADRNNS) are disordered. Lysine 165 is covalently cross-linked (Glycyl lysine isopeptide (Lys-Gly) (interchain with G-Cter in ubiquitin)). Residues 292 to 300 (DILKGRIKT) are G2 motif. Residues leucine 294, threonine 300, glycine 322, asparagine 388, lysine 389, aspartate 391, and alanine 444 each coordinate GTP. A Mg(2+)-binding site is contributed by threonine 300. The tract at residues 315–324 (FKVLDAGGQR) is G3 motif. The G4 motif stretch occupies residues 384 to 391 (ILFLNKID). Residues 442-447 (TCATDT) form a G5 motif region.

It belongs to the G-alpha family. G(q) subfamily. G proteins are composed of 3 units; alpha, beta and gamma. The alpha chain contains the guanine nucleotide binding site. In its GDP-bound form, binds to the G protein beta-gamma dimer STE4-STE18. Directly interacts with the beta subunit STE4. Probably forms preactivation complexes with unligated receptors STE2 and STE3. Interacts with FUS3. Pheromone-induced activation of GPA1 increases its association with FUS3. Interacts with SCP160. SCP160 binds specifically to the GTP-bound form of GPA1. Interacts with the phosphatidylinositol 3-kinase (PI3K) subunits VPS15 and VPS34 at the endosome. The GTP-bound form of GPA1 binds directly and selectively to the catalytic subunit VPS34, while the GDP-bound form binds to VPS15, which appears to function as an alternative G protein beta subunit for GPA1. Interacts with regulators of G protein signaling (RGS) proteins MDM1, RAX1, RGS2 and SST2, but SST2 alone binds preferentially to the transition state conformation of GPA1, indicating that it acts as a GAP for this G protein. Mg(2+) is required as a cofactor. N-myristoylation by NMT1 is pheromone-stimulated and required for palmitoylation of Cys-3. This lipid modification anchors the protein to membranes. Depalmitoylated by YLR118C/APT1. In terms of processing, monoubiquitination targets the protein for degradation to the vacuole, and polyubiquitination tags the protein for degradation by the proteasome. This may be an additional signaling regulation mechanism.

It localises to the cell membrane. The protein resides in the endosome membrane. Its activity is regulated as follows. Alternates between an inactive form bound to GDP and an active form bound to GTP. Activated by the G protein coupled receptors (GPCRs) STE2 and STE3, which serve as guanine nucleotide-exchange factors (GEFs), and inactivated by SST2, probably acting as a GTPase-activating protein (GAP). In terms of biological role, alpha subunit of the heterotrimeric guanine nucleotide-binding protein (G protein) that mediates mating pheromone signal transduction. Binding of alpha-factor or a-factor to its cognate transmembrane receptor STE2 and STE3, respectively, allows the receptor to serve as a guanine nucleotide exchange factor (GEF) on GPA1. The exchange of GDP for GTP on the G protein alpha subunit alters its interaction with the G protein beta subunit STE4, leading to dissociation of the G protein beta-gamma dimer STE4-STE18. The dissociated subunits activate downstream effectors to activate the mating response pathway and induce changes necessary to produce mating-competent cells. STE4-STE18 activate the downstream pheromone signaling MAP kinase cascade leading to expression of mating-specific genes, inducing cell cycle arrest in G1, promoting polarized cell growth to form mating projections (shmoos), and establishing the changes in plasma membrane, cell wall and nuclear envelope to permit cell-cell fusion (plasmogamy) and fusion of the two haploid nuclei (karyogamy). GPA1 transmits a signal that requires direct binding to the effector enzyme PI3K located at the endosome, promoting increased PI3 production. The intrinsic GTPase activity of GPA1 determines the duration of signaling, and is dramatically accelerated by the RGS protein SST2. In unstimulated cells, GDP-bound GPA1 sequesters the G protein beta-gamma subunit STE4-STE18, preventing it from activating the downstream effectors. Also down-regulates the signal by inhibiting the pheromone-induced accumulation of FUS3 in the nucleus. The protein is Guanine nucleotide-binding protein alpha-1 subunit (GPA1) of Saccharomyces cerevisiae (strain ATCC 204508 / S288c) (Baker's yeast).